We begin with the raw amino-acid sequence, 158 residues long: Serine-protein kinase RsbW (158 aa).

It belongs to the anti-sigma-factor family.

The enzyme catalyses L-seryl-[protein] + ATP = O-phospho-L-seryl-[protein] + ADP + H(+). It catalyses the reaction L-threonyl-[protein] + ATP = O-phospho-L-threonyl-[protein] + ADP + H(+). Its function is as follows. Negative regulator of sigma-B activity. Phosphorylates and inactivates its specific antagonist protein, RsbV. Upon phosphorylation of RsbV, RsbW is released and binds to sigma-B, thereby blocking its ability to form an RNA polymerase holoenzyme (E-sigma-B). In Oceanobacillus iheyensis (strain DSM 14371 / CIP 107618 / JCM 11309 / KCTC 3954 / HTE831), this protein is Serine-protein kinase RsbW.